The following is a 205-amino-acid chain: ATP-dependent Clp protease proteolytic subunit (205 aa).

The active-site Nucleophile is serine 107. Histidine 132 is a catalytic residue.

Belongs to the peptidase S14 family. As to quaternary structure, fourteen ClpP subunits assemble into 2 heptameric rings which stack back to back to give a disk-like structure with a central cavity, resembling the structure of eukaryotic proteasomes.

Its subcellular location is the cytoplasm. The enzyme catalyses Hydrolysis of proteins to small peptides in the presence of ATP and magnesium. alpha-casein is the usual test substrate. In the absence of ATP, only oligopeptides shorter than five residues are hydrolyzed (such as succinyl-Leu-Tyr-|-NHMec, and Leu-Tyr-Leu-|-Tyr-Trp, in which cleavage of the -Tyr-|-Leu- and -Tyr-|-Trp bonds also occurs).. Functionally, cleaves peptides in various proteins in a process that requires ATP hydrolysis. Has a chymotrypsin-like activity. Plays a major role in the degradation of misfolded proteins. In Pseudoalteromonas translucida (strain TAC 125), this protein is ATP-dependent Clp protease proteolytic subunit.